Consider the following 123-residue polypeptide: Small ribosomal subunit protein uS12cz/uS12cy (123 aa).

This sequence belongs to the universal ribosomal protein uS12 family. In terms of assembly, part of the 30S ribosomal subunit.

The protein resides in the plastid. Its subcellular location is the chloroplast. With S4 and S5 plays an important role in translational accuracy. Located at the interface of the 30S and 50S subunits. The polypeptide is Small ribosomal subunit protein uS12cz/uS12cy (rps12-A) (Citrus sinensis (Sweet orange)).